We begin with the raw amino-acid sequence, 605 residues long: Ras guanine nucleotide exchange factor A (605 aa).

The region spanning 67–99 (DKTAIIQLILQHLSTKGLKQTKQTLEKEARTTT) is the LisH domain. Positions 198-320 (DDEVVKFASL…SLTKMVEKLS (123 aa)) constitute an N-terminal Ras-GEF domain. The Ras-GEF domain maps to 353-597 (DEEEIARQLT…YRESLKREPK (245 aa)).

Component of the Sca1 complex composed of at least gefA, gefH, scaA, phr, and the protein phosphatase 2A subunits pppA and pho2B. Interacts directly with gefH.

It is found in the cell membrane. In terms of biological role, ras-bound GDP/GTP exchange factor required for normal activation of adenylyl cyclase. Component of the Sca1 complex, a regulator of cell motility, chemotaxis and signal relay. The Sca1 complex is recruited to the plasma membrane in a chemoattractant- and F-actin-dependent manner and is enriched at the leading edge of chemotaxing cells where it regulates F-actin dynamics and signal relay by controlling the activation of rasC and the downstream target of rapamycin complex 2 (TORC2)-Akt/protein kinase B (PKB) pathway. This is Ras guanine nucleotide exchange factor A (gefA) from Dictyostelium discoideum (Social amoeba).